A 168-amino-acid chain; its full sequence is Cyclin-dependent kinase 4 inhibitor C (168 aa).

4 ANK repeats span residues 4 to 33 (PWGN…NVNA), 37 to 65 (FGRT…NPDL), 69 to 98 (TGFA…DVNI), and 102 to 132 (EGNL…NVGH).

This sequence belongs to the CDKN2 cyclin-dependent kinase inhibitor family. In terms of assembly, heterodimer of p18 with CDK6. In terms of tissue distribution, highest levels found in skeletal muscle. Also found in pancreas and heart.

In terms of biological role, interacts strongly with CDK6, weakly with CDK4. Inhibits cell growth and proliferation with a correlated dependence on endogenous retinoblastoma protein RB. The protein is Cyclin-dependent kinase 4 inhibitor C (CDKN2C) of Homo sapiens (Human).